The chain runs to 407 residues: Peptidase T (407 aa).

Histidine 81 contributes to the Zn(2+) binding site. The active site involves aspartate 83. Aspartate 142 is a Zn(2+) binding site. Glutamate 176 (proton acceptor) is an active-site residue. Positions 177, 199, and 381 each coordinate Zn(2+).

Belongs to the peptidase M20B family. Zn(2+) serves as cofactor.

The protein localises to the cytoplasm. The enzyme catalyses Release of the N-terminal residue from a tripeptide.. Its function is as follows. Cleaves the N-terminal amino acid of tripeptides. The protein is Peptidase T of Streptococcus sanguinis (strain SK36).